Consider the following 552-residue polypeptide: Hydroxylamine reductase (552 aa).

4 residues coordinate [2Fe-2S] cluster: C5, C8, C20, and C27. 8 residues coordinate hybrid [4Fe-2O-2S] cluster: H251, E275, C319, C407, C435, C460, E494, and K496. Cysteine persulfide is present on C407.

Belongs to the HCP family. [2Fe-2S] cluster serves as cofactor. Requires hybrid [4Fe-2O-2S] cluster as cofactor.

Its subcellular location is the cytoplasm. The enzyme catalyses A + NH4(+) + H2O = hydroxylamine + AH2 + H(+). Catalyzes the reduction of hydroxylamine to form NH(3) and H(2)O. This is Hydroxylamine reductase from Shigella sonnei (strain Ss046).